The sequence spans 537 residues: Glucose-6-phosphate isomerase (537 aa).

Glu-355 serves as the catalytic Proton donor. Catalysis depends on residues His-386 and Lys-501.

The protein belongs to the GPI family.

Its subcellular location is the cytoplasm. It carries out the reaction alpha-D-glucose 6-phosphate = beta-D-fructose 6-phosphate. It participates in carbohydrate biosynthesis; gluconeogenesis. Its pathway is carbohydrate degradation; glycolysis; D-glyceraldehyde 3-phosphate and glycerone phosphate from D-glucose: step 2/4. In terms of biological role, catalyzes the reversible isomerization of glucose-6-phosphate to fructose-6-phosphate. In Protochlamydia amoebophila (strain UWE25), this protein is Glucose-6-phosphate isomerase.